The primary structure comprises 310 residues: Olfactory receptor 2A1/2A42 (310 aa).

Over 1-24 (MGENQTMVTEFLLLGFLLGPRIQM) the chain is Extracellular. Asn4 carries an N-linked (GlcNAc...) asparagine glycan. Residues 25–48 (LLFGLFSLFYIFTLLGNGAILGLI) form a helical membrane-spanning segment. Residues 49-56 (SLDSRLHT) are Cytoplasmic-facing. The chain crosses the membrane as a helical span at residues 57-78 (PMYFFLSHLAVVDIAYTRNTVP). Residues 79-99 (QMLANLLHPAKPISFAGCMTQ) lie on the Extracellular side of the membrane. A disulfide bridge connects residues Cys96 and Cys188. A helical transmembrane segment spans residues 100 to 119 (TFLCLSFGHSECLLLVLMSY). The Cytoplasmic segment spans residues 120–138 (DRYVAICHPLRYSVIMTWR). The chain crosses the membrane as a helical span at residues 139–157 (VCITLAVTSWTCGSLLALA). At 158–195 (HVVLILRLPFSGPHEINHFFCEILSVLRLACADTWLNQ) the chain is on the extracellular side. The helical transmembrane segment at 196 to 218 (VVIFAACVFFLVGPPSLVLVSYS) threads the bilayer. Residues 219-235 (HILAAILRIQSGEGRRK) lie on the Cytoplasmic side of the membrane. A helical transmembrane segment spans residues 236-258 (AFSTCSSHLCVVGLFFGSAIIMY). Residues 259–271 (MAPKSRHPEEQQK) lie on the Extracellular side of the membrane. Residues 272–291 (VFFLFYSFFNPTLNPLIYSL) traverse the membrane as a helical segment. At 292–310 (RNGEVKGALRRALGKESHS) the chain is on the cytoplasmic side.

Belongs to the G-protein coupled receptor 1 family.

It is found in the cell membrane. Functionally, odorant receptor. The chain is Olfactory receptor 2A1/2A42 (OR2A1) from Homo sapiens (Human).